Here is a 51-residue protein sequence, read N- to C-terminus: Insulin (51 aa).

Disulfide bonds link Cys-7–Cys-37, Cys-19–Cys-50, and Cys-36–Cys-41.

This sequence belongs to the insulin family. In terms of assembly, heterodimer of a B chain and an A chain linked by two disulfide bonds.

It localises to the secreted. Functionally, insulin decreases blood glucose concentration. It increases cell permeability to monosaccharides, amino acids and fatty acids. It accelerates glycolysis, the pentose phosphate cycle, and glycogen synthesis in liver. The sequence is that of Insulin (INS) from Camelus dromedarius (Dromedary).